Reading from the N-terminus, the 284-residue chain is Bifunctional protein FolD (284 aa).

Residues 166 to 168 (GAS), Ser-191, and Ile-232 each bind NADP(+).

This sequence belongs to the tetrahydrofolate dehydrogenase/cyclohydrolase family. In terms of assembly, homodimer.

It carries out the reaction (6R)-5,10-methylene-5,6,7,8-tetrahydrofolate + NADP(+) = (6R)-5,10-methenyltetrahydrofolate + NADPH. It catalyses the reaction (6R)-5,10-methenyltetrahydrofolate + H2O = (6R)-10-formyltetrahydrofolate + H(+). It functions in the pathway one-carbon metabolism; tetrahydrofolate interconversion. Its function is as follows. Catalyzes the oxidation of 5,10-methylenetetrahydrofolate to 5,10-methenyltetrahydrofolate and then the hydrolysis of 5,10-methenyltetrahydrofolate to 10-formyltetrahydrofolate. The chain is Bifunctional protein FolD from Neisseria gonorrhoeae (strain ATCC 700825 / FA 1090).